The primary structure comprises 60 residues: MPVPKKKTSKARSRRRYAVWLGKAKLQAQRAMTIGRAILSGRNTGFYYPKAKSEEEEGEE.

Belongs to the bacterial ribosomal protein bL32 family.

This is Large ribosomal subunit protein bL32 from Synechococcus sp. (strain JA-3-3Ab) (Cyanobacteria bacterium Yellowstone A-Prime).